We begin with the raw amino-acid sequence, 516 residues long: Importin subunit alpha-B (516 aa).

A compositionally biased stretch (basic and acidic residues) spans 1 to 29 (MQRSKQETRKSQYKKSIDSDESRRKREEA). The disordered stretch occupies residues 1–54 (MQRSKQETRKSQYKKSIDSDESRRKREEASLSIRKNKREESLLKKRTQAVPGST). The region spanning 1 to 55 (MQRSKQETRKSQYKKSIDSDESRRKREEASLSIRKNKREESLLKKRTQAVPGSTP) is the IBB domain. ARM repeat units lie at residues 55-96 (PVKV…KLLS), 100-140 (SPPI…NIAS), 143-182 (PEQT…NIAG), 185-227 (HYCR…NFCR), 229-268 (KPQP…YLSD), 271-310 (NERI…NIVT), 313-352 (DNQT…NITA), 355-394 (KNQI…NATS), and 398-437 (PQQI…NILV). Residues 490–516 (EQEDEGDLMPEGSSFSFSNQTNSNFNL) are disordered. The segment covering 502-516 (SSFSFSNQTNSNFNL) has biased composition (low complexity).

This sequence belongs to the importin alpha family. In terms of assembly, forms a complex with tnpo/importin subunit beta.

It localises to the cytoplasm. The protein localises to the nucleus envelope. In terms of biological role, functions in nuclear protein import via a substrate-importin alpha-beta transport complex that passes though the nuclear pore complexes (NPC). Binds specifically and directly to substrates containing either a simple or bipartite NLS motif. This is Importin subunit alpha-B from Dictyostelium discoideum (Social amoeba).